The following is a 542-amino-acid chain: Chaperonin GroEL (542 aa).

ATP is bound by residues 29 to 32 (TLGP), 86 to 90 (DGTTT), Gly413, and Asp494.

It belongs to the chaperonin (HSP60) family. As to quaternary structure, forms a cylinder of 14 subunits composed of two heptameric rings stacked back-to-back. Interacts with the co-chaperonin GroES.

Its subcellular location is the cytoplasm. The catalysed reaction is ATP + H2O + a folded polypeptide = ADP + phosphate + an unfolded polypeptide.. Together with its co-chaperonin GroES, plays an essential role in assisting protein folding. The GroEL-GroES system forms a nano-cage that allows encapsulation of the non-native substrate proteins and provides a physical environment optimized to promote and accelerate protein folding. The chain is Chaperonin GroEL from Endomicrobium trichonymphae.